A 367-amino-acid polypeptide reads, in one-letter code: 3-dehydroquinate synthase (367 aa).

NAD(+) is bound by residues 108-112, 132-133, Lys145, and Lys154; these read GVIGD and TT. Zn(2+)-binding residues include Glu187, His249, and His267.

It belongs to the sugar phosphate cyclases superfamily. Dehydroquinate synthase family. Requires Co(2+) as cofactor. The cofactor is Zn(2+). NAD(+) is required as a cofactor.

Its subcellular location is the cytoplasm. The enzyme catalyses 7-phospho-2-dehydro-3-deoxy-D-arabino-heptonate = 3-dehydroquinate + phosphate. It participates in metabolic intermediate biosynthesis; chorismate biosynthesis; chorismate from D-erythrose 4-phosphate and phosphoenolpyruvate: step 2/7. In terms of biological role, catalyzes the conversion of 3-deoxy-D-arabino-heptulosonate 7-phosphate (DAHP) to dehydroquinate (DHQ). The chain is 3-dehydroquinate synthase from Paracoccus denitrificans (strain Pd 1222).